A 134-amino-acid polypeptide reads, in one-letter code: MGRVVQTTGKRKTAIARAVIREGEGRVRVNKRPVNIIEPEMARMKIMEPLIIAGEDIVSQVDIDVKVQGGGWMSQAEAARIAIARGLVEWTGDPDLRDAYMAYDRHMLKGDPRRKEPKKFGGRGARARRQKSYR.

Positions 109–134 are disordered; it reads KGDPRRKEPKKFGGRGARARRQKSYR. Basic residues predominate over residues 115–134; it reads KEPKKFGGRGARARRQKSYR.

This sequence belongs to the universal ribosomal protein uS9 family.

This is Small ribosomal subunit protein uS9 from Methanopyrus kandleri (strain AV19 / DSM 6324 / JCM 9639 / NBRC 100938).